The following is a 196-amino-acid chain: Putative HTH-type transcriptional regulator in exeN 3'region (196 aa).

An HTH luxR-type domain is found at alanine 120–leucine 185. The segment at residues threonine 144 to lysine 163 is a DNA-binding region (H-T-H motif).

In Aeromonas salmonicida, this protein is Putative HTH-type transcriptional regulator in exeN 3'region.